The sequence spans 248 residues: Probable transcriptional regulatory protein Acel_1346 (248 aa).

This sequence belongs to the TACO1 family.

The protein resides in the cytoplasm. The polypeptide is Probable transcriptional regulatory protein Acel_1346 (Acidothermus cellulolyticus (strain ATCC 43068 / DSM 8971 / 11B)).